The chain runs to 478 residues: Kynurenine 3-monooxygenase (478 aa).

FAD-binding positions include Val19, 37–40, and Ala57; that span reads YEAR. Residues Arg85 and Tyr99 each contribute to the L-kynurenine site. FAD is bound by residues Arg111, Leu136, Thr172, Asp304, and 317–318; that span reads MN. The L-kynurenine site is built by Asn363 and Tyr398. Helical transmembrane passes span 385 to 404 and 425 to 445; these read FLHALMPSTFIPLYTMVAFT and GLFVLGSLVAIGSAYILVHHL.

This sequence belongs to the aromatic-ring hydroxylase family. KMO subfamily. FAD serves as cofactor. In terms of tissue distribution, highest activity in liver and kidney. Low activity in spleen, stomach, intestinal tract, esophagus, heart and lung.

The protein localises to the mitochondrion outer membrane. It carries out the reaction L-kynurenine + NADPH + O2 + H(+) = 3-hydroxy-L-kynurenine + NADP(+) + H2O. It participates in cofactor biosynthesis; NAD(+) biosynthesis; quinolinate from L-kynurenine: step 1/3. Functionally, catalyzes the hydroxylation of L-kynurenine (L-Kyn) to form 3-hydroxy-L-kynurenine (L-3OHKyn). Required for synthesis of quinolinic acid, a neurotoxic NMDA receptor antagonist and potential endogenous inhibitor of NMDA receptor signaling in axonal targeting, synaptogenesis and apoptosis during brain development. Quinolinic acid may also affect NMDA receptor signaling in pancreatic beta cells, osteoblasts, myocardial cells, and the gastrointestinal tract. The polypeptide is Kynurenine 3-monooxygenase (Rattus norvegicus (Rat)).